A 426-amino-acid chain; its full sequence is Adenylosuccinate synthetase (426 aa).

GTP contacts are provided by residues 12–18 (GDEGKGK) and 40–42 (GHT). Aspartate 13 (proton acceptor) is an active-site residue. Mg(2+)-binding residues include aspartate 13 and glycine 40. IMP is bound by residues 13–16 (DEGK), 38–41 (NAGH), threonine 130, arginine 144, glutamine 224, threonine 239, and arginine 303. The active-site Proton donor is the histidine 41. 299-305 (TVTNRVR) contributes to the substrate binding site. GTP-binding positions include arginine 305, 331–333 (KLD), and 413–415 (STG).

This sequence belongs to the adenylosuccinate synthetase family. As to quaternary structure, homodimer. It depends on Mg(2+) as a cofactor.

It localises to the cytoplasm. The enzyme catalyses IMP + L-aspartate + GTP = N(6)-(1,2-dicarboxyethyl)-AMP + GDP + phosphate + 2 H(+). It participates in purine metabolism; AMP biosynthesis via de novo pathway; AMP from IMP: step 1/2. Functionally, plays an important role in the de novo pathway of purine nucleotide biosynthesis. Catalyzes the first committed step in the biosynthesis of AMP from IMP. The protein is Adenylosuccinate synthetase of Anaplasma marginale (strain St. Maries).